Here is a 914-residue protein sequence, read N- to C-terminus: Translation initiation factor IF-2 (914 aa).

Positions Lys58–Pro160 are disordered. A compositionally biased stretch (basic and acidic residues) spans Lys70–Ala91. Over residues Ala92–Ala103 the composition is skewed to basic residues. Residues Pro104 to Pro160 are compositionally biased toward basic and acidic residues. Positions Glu413–Lys582 constitute a tr-type G domain. Residues Gly422 to Thr429 are G1. Gly422–Thr429 is a binding site for GTP. Residues Gly447–His451 are G2. Residues Asp468 to Gly471 are G3. GTP-binding positions include Asp468 to His472 and Asn522 to Asp525. The segment at Asn522–Asp525 is G4. The tract at residues Ser558–Lys560 is G5.

The protein belongs to the TRAFAC class translation factor GTPase superfamily. Classic translation factor GTPase family. IF-2 subfamily.

The protein resides in the cytoplasm. Its function is as follows. One of the essential components for the initiation of protein synthesis. Protects formylmethionyl-tRNA from spontaneous hydrolysis and promotes its binding to the 30S ribosomal subunits. Also involved in the hydrolysis of GTP during the formation of the 70S ribosomal complex. The protein is Translation initiation factor IF-2 of Campylobacter hominis (strain ATCC BAA-381 / DSM 21671 / CCUG 45161 / LMG 19568 / NCTC 13146 / CH001A).